Here is a 241-residue protein sequence, read N- to C-terminus: E3 ubiquitin-protein ligase RNF166 (241 aa).

Residues 8–30 (VASSQHRQHHSHQSLATPSSADS) form a disordered region. An RING-type zinc finger spans residues 37-77 (CPICLEVYYKPVAIGSCGHTFCGECLQPCLQVSSPLCPLCR). Zn(2+)-binding residues include cysteine 102, cysteine 105, histidine 117, and cysteine 121. A C2HC RNF-type zinc finger spans residues 102-121 (CRGCSKKVTLAKMRAHISSC). The UIM domain occupies 225 to 241 (DEEAALQAALALSLSEN).

It localises to the cytoplasm. The enzyme catalyses S-ubiquitinyl-[E2 ubiquitin-conjugating enzyme]-L-cysteine + [acceptor protein]-L-lysine = [E2 ubiquitin-conjugating enzyme]-L-cysteine + N(6)-ubiquitinyl-[acceptor protein]-L-lysine.. It functions in the pathway protein modification; protein ubiquitination. E3 ubiquitin-protein ligase that promotes the ubiquitination of different substrates. The polypeptide is E3 ubiquitin-protein ligase RNF166 (rnf166) (Xenopus laevis (African clawed frog)).